Reading from the N-terminus, the 248-residue chain is 1-(5-phosphoribosyl)-5-[(5-phosphoribosylamino)methylideneamino] imidazole-4-carboxamide isomerase (248 aa).

Catalysis depends on D8, which acts as the Proton acceptor. D127 functions as the Proton donor in the catalytic mechanism.

It belongs to the HisA/HisF family.

It is found in the cytoplasm. It catalyses the reaction 1-(5-phospho-beta-D-ribosyl)-5-[(5-phospho-beta-D-ribosylamino)methylideneamino]imidazole-4-carboxamide = 5-[(5-phospho-1-deoxy-D-ribulos-1-ylimino)methylamino]-1-(5-phospho-beta-D-ribosyl)imidazole-4-carboxamide. The protein operates within amino-acid biosynthesis; L-histidine biosynthesis; L-histidine from 5-phospho-alpha-D-ribose 1-diphosphate: step 4/9. This chain is 1-(5-phosphoribosyl)-5-[(5-phosphoribosylamino)methylideneamino] imidazole-4-carboxamide isomerase, found in Thermotoga neapolitana (strain ATCC 49049 / DSM 4359 / NBRC 107923 / NS-E).